We begin with the raw amino-acid sequence, 426 residues long: Pistil-specific extensin-like protein (426 aa).

The N-terminal stretch at 1 to 23 is a signal peptide; sequence MAVIISSKVLLIQLFVLVLGSFS. 2 disordered regions span residues 56-109 and 121-254; these read GPTF…GSKL and NLPD…AAEP. Composition is skewed to pro residues over residues 60–94, 123–161, 168–224, and 231–254; these read VLPPPSPLPSPPPPSPSPPPPSPSPPPPSTIPLIP, PDVPPIGGGPPVNQPKPSSPSPLVKPPPPPPSPCKPSPP, PPQP…PPPP, and LLPPPPPVAYPPVMTPSPSPAAEP. A run of 3 repeats spans residues 69–73, 76–80, and 83–87. Positions 69–182 are 4 X 5 AA repeats of S-P(4); that stretch reads SPPPPSPSPP…PAKQPSPPPP (114 aa). The stretch at 178-182 is repeat 4; the sequence is SPPPP. A glycan (N-linked (GlcNAc...) asparagine) is linked at Asn-310.

As to expression, pistil (stigma and style tissue).

The sequence is that of Pistil-specific extensin-like protein from Nicotiana tabacum (Common tobacco).